Reading from the N-terminus, the 313-residue chain is Porphobilinogen deaminase (313 aa).

Cys-242 is modified (S-(dipyrrolylmethanemethyl)cysteine).

The protein belongs to the HMBS family. In terms of assembly, monomer. It depends on dipyrromethane as a cofactor.

It carries out the reaction 4 porphobilinogen + H2O = hydroxymethylbilane + 4 NH4(+). Its pathway is porphyrin-containing compound metabolism; protoporphyrin-IX biosynthesis; coproporphyrinogen-III from 5-aminolevulinate: step 2/4. Its function is as follows. Tetrapolymerization of the monopyrrole PBG into the hydroxymethylbilane pre-uroporphyrinogen in several discrete steps. This is Porphobilinogen deaminase from Pseudomonas fluorescens (strain ATCC BAA-477 / NRRL B-23932 / Pf-5).